The following is a 358-amino-acid chain: Peroxidase 12 (358 aa).

An N-terminal signal peptide occupies residues 1-31 (MTKAYSTRVLTFLILISLMAVTLNLFPTVEA). Cystine bridges form between cysteine 53/cysteine 134, cysteine 86/cysteine 91, cysteine 140/cysteine 335, and cysteine 220/cysteine 247. Residue histidine 84 is the Proton acceptor of the active site. Ca(2+) is bound by residues aspartate 85, valine 88, glycine 90, glutamate 92, and serine 94. Residue proline 183 coordinates substrate. N-linked (GlcNAc...) asparagine glycans are attached at residues asparagine 188 and asparagine 202. Position 213 (histidine 213) interacts with heme b. Threonine 214 is a Ca(2+) binding site. Residue asparagine 251 is glycosylated (N-linked (GlcNAc...) asparagine). Ca(2+)-binding residues include aspartate 259, serine 262, and aspartate 267. N-linked (GlcNAc...) asparagine glycosylation occurs at asparagine 334.

Belongs to the peroxidase family. Classical plant (class III) peroxidase subfamily. Requires heme b as cofactor. Ca(2+) is required as a cofactor. As to expression, expressed in roots and leaves.

The protein localises to the secreted. The protein resides in the vacuole. It carries out the reaction 2 a phenolic donor + H2O2 = 2 a phenolic radical donor + 2 H2O. Functionally, removal of H(2)O(2), oxidation of toxic reductants, biosynthesis and degradation of lignin, suberization, auxin catabolism, response to environmental stresses such as wounding, pathogen attack and oxidative stress. These functions might be dependent on each isozyme/isoform in each plant tissue. Exhibits a Ca(2+)-pectate binding affinity which could be interpreted in vivo as a specificity to interact with the pectic structure of the cell wall. The sequence is that of Peroxidase 12 (PER12) from Arabidopsis thaliana (Mouse-ear cress).